Consider the following 584-residue polypeptide: Alpha-glucosidase MAL12 (584 aa).

Residue D214 is the Nucleophile of the active site. E276 functions as the Proton donor in the catalytic mechanism.

The protein belongs to the glycosyl hydrolase 13 family.

The enzyme catalyses Hydrolysis of terminal, non-reducing (1-&gt;4)-linked alpha-D-glucose residues with release of alpha-D-glucose.. In Saccharomyces cerevisiae (strain ATCC 204508 / S288c) (Baker's yeast), this protein is Alpha-glucosidase MAL12 (MAL12).